Reading from the N-terminus, the 1009-residue chain is Glutamate receptor ionotropic, delta-1 (1009 aa).

The first 20 residues, 1 to 20 (MEALTLWLLPWICQCVSVRA), serve as a signal peptide directing secretion. The segment at 21 to 436 (DSIIHIGAIF…ERPMGSRLQG (416 aa)) is interaction with CBLN1. Topologically, residues 21-562 (DSIIHIGAIF…SIFSLFAPFD (542 aa)) are extracellular. Intrachain disulfides connect Cys-80-Cys-351, Cys-96-Cys-128, and Cys-294-Cys-306. Residues Asn-131 and Asn-200 are each glycosylated (N-linked (GlcNAc...) asparagine). N-linked (GlcNAc...) asparagine glycans are attached at residues Asn-422 and Asn-498. Ca(2+) contacts are provided by Glu-527, Val-530, and Asp-531. The chain crosses the membrane as a helical span at residues 563–583 (FAVWACIAAAIPVVGVLIFVL). The Cytoplasmic segment spans residues 584–637 (NRIQAVRAQSAAQPRPSASATLHSAIWIVYGAFVQQGGESSVNSMAMRIVMGSW). Residues 638–658 (WLFTLIVCSSYTANLAAFLTV) form a helical membrane-spanning segment. At 659 to 830 (SRMDNPIRTF…ADGKSLKLHS (172 aa)) the chain is on the extracellular side. Ca(2+)-binding residues include Asp-753, Asp-755, and Ser-757. The helical transmembrane segment at 831–851 (FAGVFCILAIGLLLACLVAAL) threads the bilayer. The Cytoplasmic portion of the chain corresponds to 852–1009 (ELWWNSNRCH…ALDTSHGTSI (158 aa)). The segment covering 930–942 (FLPEQSSHGTSRT) has biased composition (polar residues). The segment at 930-954 (FLPEQSSHGTSRTLSSGPSSNLPLP) is disordered. A compositionally biased stretch (low complexity) spans 943–954 (LSSGPSSNLPLP).

This sequence belongs to the glutamate-gated ion channel (TC 1.A.10.1) family. GRID1 subfamily. In terms of assembly, homodimer. Interacts (via extracellular N-terminal domain) with CBLN1 (via C1q domain), and more weakly with CBLN2; the interactions mediate the trans-synaptic adhesion complexes also with neurexins and are required for ligand-gated cation channel activity.

Its subcellular location is the postsynaptic cell membrane. The enzyme catalyses Ca(2+)(in) = Ca(2+)(out). It catalyses the reaction Na(+)(in) = Na(+)(out). Its function is as follows. Member of the ionotropic glutamate receptor family, which plays a crucial role in synaptic organization and signal transduction in the central nervous system. Although it shares structural features with ionotropic glutamate receptors, does not bind glutamate as a primary ligand. Instead, forms trans-synaptic adhesion complexes with presynaptic neurexins and cerebellins, regulating NMDA and AMPA receptor activity and influencing synaptic plasticity through signal transduction. In the presence of neurexins and cerebellins, forms cation-selective channels that are proposed to be gated by glycine and D-serine. However, recent research disputes this ligand-gated cation channel activity. Cation-selective ion channel can be triggered by GRM1 in dopaminergic neurons. Also acts as a receptor for GABA, modulating inhibitory synaptic plasticity through non-ionotropic mechanisms. This Homo sapiens (Human) protein is Glutamate receptor ionotropic, delta-1.